Here is a 328-residue protein sequence, read N- to C-terminus: Homeobox protein Hox-C13 (328 aa).

Positions 23 to 48 (AAESGSGGGGGGGGAGGAGGGCSGAS) are disordered. Residues 27 to 45 (GSGGGGGGGGAGGAGGGCS) are compositionally biased toward gly residues. The homeobox DNA-binding region spans 258–317 (GRKKRVPYTKVQLKELEKEYAASKFITKEKRRRISATTNLSERQVTIWFQNRRVKEKKVV).

It belongs to the Abd-B homeobox family. In terms of tissue distribution, expressed in differentiating keratinocytes. In the hair follicle lower matrix, expressed in all 3 hair shaft-forming compartments, i.e. cuticle, cortex and medulla. Expression stops sharply at the boundary with the germinal matrix compartment.

It is found in the nucleus. Transcription factor which plays a role in hair follicle differentiation. Regulates FOXQ1 expression and that of other hair-specific genes. The protein is Homeobox protein Hox-C13 (Hoxc13) of Mus musculus (Mouse).